Consider the following 220-residue polypeptide: ATP-dependent dethiobiotin synthetase BioD (220 aa).

12-17 (DVGKTI) is a binding site for ATP. Position 16 (Thr16) interacts with Mg(2+). The active site involves Lys37. Position 41 (Thr41) interacts with substrate. Residues Asp49, 107 to 110 (EGAG), 167 to 168 (GS), and 197 to 199 (PAG) contribute to the ATP site. Positions 49 and 107 each coordinate Mg(2+).

This sequence belongs to the dethiobiotin synthetase family. In terms of assembly, homodimer. Mg(2+) serves as cofactor.

The protein localises to the cytoplasm. The enzyme catalyses (7R,8S)-7,8-diammoniononanoate + CO2 + ATP = (4R,5S)-dethiobiotin + ADP + phosphate + 3 H(+). Its pathway is cofactor biosynthesis; biotin biosynthesis; biotin from 7,8-diaminononanoate: step 1/2. Functionally, catalyzes a mechanistically unusual reaction, the ATP-dependent insertion of CO2 between the N7 and N8 nitrogen atoms of 7,8-diaminopelargonic acid (DAPA, also called 7,8-diammoniononanoate) to form a ureido ring. The protein is ATP-dependent dethiobiotin synthetase BioD of Corynebacterium efficiens (strain DSM 44549 / YS-314 / AJ 12310 / JCM 11189 / NBRC 100395).